A 215-amino-acid chain; its full sequence is Cytochrome b6 (215 aa).

A helical membrane pass occupies residues Ile32–Phe52. Position 35 (Cys35) interacts with heme c. Heme b contacts are provided by His86 and His100. 3 consecutive transmembrane segments (helical) span residues Ala90–Phe110, Leu116–Tyr136, and Leu186–Ile206. Positions 187 and 202 each coordinate heme b.

Belongs to the cytochrome b family. PetB subfamily. The 4 large subunits of the cytochrome b6-f complex are cytochrome b6, subunit IV (17 kDa polypeptide, PetD), cytochrome f and the Rieske protein, while the 4 small subunits are PetG, PetL, PetM and PetN. The complex functions as a dimer. It depends on heme b as a cofactor. Heme c is required as a cofactor.

The protein localises to the plastid. Its subcellular location is the chloroplast thylakoid membrane. Component of the cytochrome b6-f complex, which mediates electron transfer between photosystem II (PSII) and photosystem I (PSI), cyclic electron flow around PSI, and state transitions. The protein is Cytochrome b6 of Gossypium barbadense (Sea Island cotton).